The primary structure comprises 436 residues: Trigger factor (436 aa).

One can recognise a PPIase FKBP-type domain in the interval 161–246 (EDQLNIDFVG…VNSVSEPKLP (86 aa)).

This sequence belongs to the FKBP-type PPIase family. Tig subfamily.

It localises to the cytoplasm. It catalyses the reaction [protein]-peptidylproline (omega=180) = [protein]-peptidylproline (omega=0). Functionally, involved in protein export. Acts as a chaperone by maintaining the newly synthesized protein in an open conformation. Functions as a peptidyl-prolyl cis-trans isomerase. In Pseudomonas fluorescens (strain SBW25), this protein is Trigger factor.